Reading from the N-terminus, the 193-residue chain is MFKNTFQSGFLSILYSIGSKPLQIWDKKVRNGHIKRITDNDIQSLVLEIEGTNVSTTYITCPADPKKTLGIKLPFLVMIIKNLKKYFTFEVQVLDDKNVRRRFRASNYQSTTRVKPFICTMPMRLDDGWNQIQFNLLDFTRRAYGTNYIETLRVQIHANCRIRRVYFSDRLYSEDELPAEFKLYLPVQNKAKQ.

The protein belongs to the CFAP20 family. Microtubule inner protein component of sperm flagellar doublet microtubules.

The protein localises to the nucleus. It is found in the cytoplasm. The protein resides in the cytoskeleton. Its subcellular location is the microtubule organizing center. It localises to the centrosome. The protein localises to the centriole. It is found in the cilium basal body. The protein resides in the cilium axoneme. Its subcellular location is the flagellum axoneme. Functionally, cilium- and flagellum-specific protein that plays a role in axonemal structure organization and motility. Microtubule inner protein (MIP) part of the dynein-decorated doublet microtubules (DMTs) in cilia axoneme, which is required for motile cilia beating. Involved in the regulation of the size and morphology of cilia. Required for axonemal microtubules polyglutamylation. This chain is Cilia- and flagella-associated protein 20, found in Homo sapiens (Human).